Consider the following 131-residue polypeptide: MALWVTAVLALACLGGLATPGPVRRSTSPPVALRELIEELSNITQDQKTSLCNSSMVWSVDLTAGGFCAALESLTNISSCNAIHRTQRILNGLCNQKASDVASSPPDTKIEVAQFISKLLNYSKQLFRYGH.

An N-terminal signal peptide occupies residues 1–18 (MALWVTAVLALACLGGLA). 4 N-linked (GlcNAc...) asparagine glycosylation sites follow: asparagine 42, asparagine 53, asparagine 76, and asparagine 121. 2 disulfides stabilise this stretch: cysteine 52–cysteine 80 and cysteine 68–cysteine 94.

It belongs to the IL-4/IL-13 family. Interacts with IL13RA2.

Its subcellular location is the secreted. Cytokine that plays important roles in allergic inflammation and immune response to parasite infection. Synergizes with IL2 in regulating interferon-gamma synthesis. Stimulates B-cell proliferation, and activation of eosinophils, basophils, and mast cells. Plays an important role in controlling IL33 activity by modulating the production of transmembrane and soluble forms of interleukin-1 receptor-like 1/IL1RL1. Displays the capacity to antagonize Th1-driven proinflammatory immune response and downregulates synthesis of many proinflammatory cytokines including IL1, IL6, IL10, IL12 and TNF-alpha through a mechanism that partially involves suppression of NF-kappa-B. Also functions on nonhematopoietic cells, including endothelial cells where it induces vascular cell adhesion protein 1/VCAM1, which is important in the recruitment of eosinophils. Exerts its biological effects through its receptors which comprises the IL4R chain and the IL13RA1 chain, to activate JAK1 and TYK2, leading to the activation of STAT6. Aside from IL13RA1, another receptor IL13RA2 acts as a high affinity decoy for IL13 and mediates internalization and depletion of extracellular IL13. This is Interleukin-13 (Il13) from Rattus norvegicus (Rat).